Here is a 64-residue protein sequence, read N- to C-terminus: MPKMKTHSGAKKRFRVTGSGKIMRQQANRRHYLEHKSSRLTRRLKGDQLVSKGSIKQIKRMLGI.

Belongs to the bacterial ribosomal protein bL35 family.

In Micrococcus luteus (strain ATCC 4698 / DSM 20030 / JCM 1464 / CCM 169 / CCUG 5858 / IAM 1056 / NBRC 3333 / NCIMB 9278 / NCTC 2665 / VKM Ac-2230) (Micrococcus lysodeikticus), this protein is Large ribosomal subunit protein bL35.